Here is an 840-residue protein sequence, read N- to C-terminus: Heat shock 70 kDa protein 4 (840 aa).

Lysine 53 is modified (N6-acetyllysine). A Phosphoserine modification is found at serine 76. Residues tyrosine 89 and tyrosine 336 each carry the phosphotyrosine modification. A phosphoserine mark is found at serine 393 and serine 415. An N6-acetyllysine modification is found at lysine 430. Positions 500 to 575 (VHKSEENEEP…QAKKAKVKTS (76 aa)) are disordered. Over residues 514-533 (QNAKEEEKMQVDQEEPHVEE) the composition is skewed to basic and acidic residues. A Phosphothreonine modification is found at threonine 538. 2 positions are modified to phosphoserine: serine 546 and serine 647. Tyrosine 660 is modified (phosphotyrosine). The residue at position 679 (lysine 679) is an N6-acetyllysine. Serine 756 carries the post-translational modification Phosphoserine. N6-methyllysine is present on lysine 773. The segment at 783–840 (ISKPKPKVEPPKEEQKNAEQNGPVDGQGDNPGPQAAEQGTDAAVPSDSDKKLPEMDID) is disordered. Composition is skewed to basic and acidic residues over residues 788–799 (PKVEPPKEEQKN) and 829–840 (DSDKKLPEMDID).

It belongs to the heat shock protein 70 family. As to quaternary structure, interacts with TJP1/ZO-1.

It localises to the cytoplasm. The chain is Heat shock 70 kDa protein 4 (HSPA4) from Pongo abelii (Sumatran orangutan).